The sequence spans 167 residues: Protein-lysine myristoyltransferase RtxC (167 aa).

Residues His-20 and Asp-89 contribute to the active site.

This sequence belongs to the RTX toxin acyltransferase family.

Its subcellular location is the cytoplasm. It carries out the reaction tetradecanoyl-[ACP] + L-lysyl-[protein] = N(6)-tetradecanoyl-L-lysyl-[protein] + holo-[ACP] + H(+). Its function is as follows. Protein-lysine myristoyltransferase that catalyzes myristoylation of the protoxin (RtxA) at two internal lysine residues, thereby converting it to the active toxin. In Kingella kingae, this protein is Protein-lysine myristoyltransferase RtxC.